The primary structure comprises 300 residues: 17-beta-hydroxysteroid dehydrogenase 13 (300 aa).

Residues 1–19 (MNLILELLLLVGIIIYSYL) form the signal peptide. Phosphoserine is present on Ser33. 40 to 67 (LITGAGHGIGRLTAYEFAKQKSRLVLWD) contacts NAD(+). Residue Ser69 is modified to Phosphoserine. Lys79 bears the N6-acetyllysine mark. Ser172 provides a ligand contact to substrate. The active-site Proton acceptor is Tyr185. Lys189 provides a ligand contact to NAD(+).

Belongs to the short-chain dehydrogenases/reductases (SDR) family.

It localises to the lipid droplet. The protein resides in the endoplasmic reticulum. It carries out the reaction 17beta-estradiol + NAD(+) = estrone + NADH + H(+). The enzyme catalyses all-trans-retinol + NAD(+) = all-trans-retinal + NADH + H(+). It catalyses the reaction all-trans-retinal + NAD(+) + H2O = all-trans-retinoate + NADH + 2 H(+). Its function is as follows. Plays a pivotal role in hepatic lipid metabolism. In vitro, it catalyzes the oxidation of a variety of lipid substrates, including 17beta-estradiol, retinol, retinal, and leukotriene B4. This is 17-beta-hydroxysteroid dehydrogenase 13 (Hsd17b13) from Rattus norvegicus (Rat).